Reading from the N-terminus, the 852-residue chain is MEDKNKTIKETLQGAADAGKRKKLIIKKKGDENSAPSSASPKKETIAESAPVKPLTPLPSRGDSGQSPIVRPAPSASKEVKYEESSRKQDSGQSGSRPLRDKDSQVRPSGDSSYPVSRSPFQKEDSNIIVSRPTQRPVRPNPGGSYQGNRGPGQGGGYQGNRGPGQGGGYQGNRGPGQQTGPGNRFGGSGPGNRSGGPGGRPMPITSAEVELSQARGSTGASKKKGHDKEKTSSDKRDFSGAENTKFFKQRFKKTKVVGVSGVSVPKEITVLENVQVGELAKKMNLKPGDVIGKLMKMGMMVTINNIIDAETAALLADEYGCKVKVVSLYEETIIEEEKDNEGDYINRPPVVTIMGHVDHGKTKLLDTIRRSSVIDTESGGITQHIGAYQVKTARGLITFLDTPGHEAFTSMRARGAKVTDIVILVVAADDGVMPQTLEAISHAKAAEVPIIVAINKIDLPTANPDKIMQELANHGLQSEEWGGQTMYVKISARENIGIDKLLEVILLQAEVMDLKANPKRKAKGTIIEAKLDPGRGSVATVLIQNGTLRVGDPFVAGVFSGRVRAMYNDLGQLIEEAGPAFPAQVTGIDGVPDAGAPFDAMADEKEARNISQHRIEFEKIGNAGAAAGTTSKVTLENMNEYIKLGALKELKVIIKADVRGSAEAIKESLEKLSTPEVKLNVIQSGAGAIVDMDVMLASASNALIIGFHVRANPKTIALAEKEQVQIKYYNIIYQVVDEIKLAMEGLLEPEKIEEVIGTAEIREIFKVSKIGNIAGCMVTSGKIQKSANVRVISDGVTKFDGKLKSLKRVKDDVNDVVSGFECGIQVDGYNDFKVGDTIEAYNVTVIKRKLE.

Residues 1 to 240 are disordered; sequence MEDKNKTIKE…KTSSDKRDFS (240 aa). Basic and acidic residues predominate over residues 78-90; sequence KEVKYEESSRKQD. Positions 106 to 120 are enriched in polar residues; that stretch reads VRPSGDSSYPVSRSP. The span at 150–200 shows a compositional bias: gly residues; the sequence is RGPGQGGGYQGNRGPGQGGGYQGNRGPGQQTGPGNRFGGSGPGNRSGGPGG. A compositionally biased stretch (basic and acidic residues) spans 227-240; it reads HDKEKTSSDKRDFS. Positions 347-516 constitute a tr-type G domain; it reads NRPPVVTIMG…LLQAEVMDLK (170 aa). Residues 356–363 form a G1 region; that stretch reads GHVDHGKT. 356–363 lines the GTP pocket; the sequence is GHVDHGKT. The interval 381-385 is G2; the sequence is GITQH. The segment at 402-405 is G3; the sequence is DTPG. GTP is bound by residues 402–406 and 456–459; these read DTPGH and NKID. The segment at 456-459 is G4; that stretch reads NKID. The segment at 492–494 is G5; the sequence is SAR.

Belongs to the TRAFAC class translation factor GTPase superfamily. Classic translation factor GTPase family. IF-2 subfamily.

Its subcellular location is the cytoplasm. Functionally, one of the essential components for the initiation of protein synthesis. Protects formylmethionyl-tRNA from spontaneous hydrolysis and promotes its binding to the 30S ribosomal subunits. Also involved in the hydrolysis of GTP during the formation of the 70S ribosomal complex. This chain is Translation initiation factor IF-2, found in Leptospira borgpetersenii serovar Hardjo-bovis (strain JB197).